Reading from the N-terminus, the 1693-residue chain is Non-structural polyprotein pORF1 (1693 aa).

In terms of domain architecture, Alphavirus-like MT spans 56-240; it reads VFRPEVFWNH…HDVSNLRSWI (185 aa). Positions 60 to 240 are methyltransferase; that stretch reads EVFWNHPIQR…HDVSNLRSWI (181 aa). Positions 241–439 are Y-domain; sequence RTTKVTGDHP…FYAQCRRWLS (199 aa). Cys434 and Cys481 form a disulfide bridge. The interval 442–509 is putative protease; sequence FHLDPRVLVF…EAYEGSDVDP (68 aa). The segment at 510 to 691 is zinc-binding; that stretch reads AESAISDISG…FSPGHVWESA (182 aa). 3 residues coordinate Zn(2+): His671, Glu673, and His686. Positions 712–778 are hinge; the sequence is SSPARPDLGF…AITHQTARHR (67 aa). The interval 732–768 is disordered; that stretch reads ATPTLAAPLPPPAPDPSPPPSAPALAEPASGATAGAP. The segment covering 739 to 753 has biased composition (pro residues); it reads PLPPPAPDPSPPPSA. Over residues 754 to 768 the composition is skewed to low complexity; sequence PALAEPASGATAGAP. The region spanning 775–921 is the Macro domain; that stretch reads ARHRRLLFTY…LYLPELAARW (147 aa). Residues 785–942 form an X-domain region; it reads PDGSKVFAGS…TITEDVARTA (158 aa). The region spanning 934–1082 is the (+)RNA virus helicase ATP-binding domain; the sequence is ITEDVARTAN…RPDLGPTSWW (149 aa). The NTPase/helicase stretch occupies residues 960 to 1204; that stretch reads GCRVTPGVVQ…ISDAIVNNFF (245 aa). Residue 975–982 coordinates ATP; it reads GVPGSGKS. In terms of domain architecture, (+)RNA virus helicase C-terminal spans 1083–1216; sequence HVTHRWPADV…GGEIGHQRPS (134 aa). The tract at residues 1207 to 1693 is RNA-directed RNA polymerase; it reads GGEIGHQRPS…LTNSILCRVE (487 aa). A RdRp catalytic domain is found at 1454 to 1565; it reads SMVFENDFSE…LCSEYRQSPG (112 aa).

The protein belongs to the hepevirus non-structural polyprotein family. The protease domain interacts with host EIF2AK4 (via C-terminus); this interaction inhibits dimerization of EIF2AK4 and prevents EIF2AK4-mediated phosphorylation of host EIF2A. Mg(2+) is required as a cofactor. Post-translationally, ORF1 polyprotein does not seem to be processed into distinct enzymatic domains by a viral protease belonging to ORF1, but could be processed by a host serine protease like thrombin.

Its subcellular location is the host cytoplasm. The protein resides in the host perinuclear region. The enzyme catalyses RNA(n) + a ribonucleoside 5'-triphosphate = RNA(n+1) + diphosphate. The catalysed reaction is GTP + S-adenosyl-L-methionine = N(7)-methyl-GTP + S-adenosyl-L-homocysteine. Its activity is regulated as follows. Putative protease: Inhibited by chymostatin. Functionally, methyltransferase: Displays a capping enzyme activity. This function is necessary since all viral RNAs are synthesized in the cytoplasm, and host capping enzymes are restricted to the nucleus. The enzymatic reaction involves a covalent link between 7-methyl-GMP and the methyltransferase, whereas eukaryotic capping enzymes form a covalent complex only with GMP. Methyltransferase catalyzes transfer of a methyl group from S-adenosylmethionine to GTP and GDP to yield m(7)GTP or m(7)GDP. GDP is a better substrate than GTP. This enzyme also displays guanylyltransferase activity to form a covalent complex, methyltransferase-m(7)GMP, from which 7-methyl-GMP is transferred to the mRNA to create the cap structure. In terms of biological role, Y-domain: Indispensable for virus replication. Its function is as follows. Putative protease: The putative protease domain although necessary for replication of the virus may not be a protease but rather a structural Zn(2+)-binding domain. Inhibits induction of IFN-beta by MDA5 and RIG-I pathways and down-regulates the expression of MDA5. NTPase/helicase: Multi-functional protein that exhibits NTPase and RNA unwinding activities. Hydrolyzes all NTPs efficiently and unwinds RNA duplexes containing 5' overhangs. Possesses a sequence independent RNA-5'-triphosphatase (RTPase) activity suggestive of its role in forming viral cap structure. Also participates in viral genome replication, RNA translocation and genome packaging/unpackaging. Functionally, RNA-directed RNA polymerase: Plays an essential role in the virus replication. Binds to the 3'-end of the genomic RNA to initiate viral replication. The chain is Non-structural polyprotein pORF1 from Homo sapiens (Human).